Reading from the N-terminus, the 621-residue chain is Microbial serine proteinase (621 aa).

An N-terminal signal peptide occupies residues 1-24; the sequence is MRKTSLALAISALLSALPIASVQA. Positions 68-440 constitute a Peptidase S8 domain; that stretch reads PRGGMAGNDL…FGLVDVNKTQ (373 aa). Asp98 (charge relay system) is an active-site residue. The segment at 114-133 is disordered; it reads PGSKNVVTGGSDPTPTDPDR. Active-site charge relay system residues include His137 and Ser354. In terms of domain architecture, P/Homo B spans 454–619; sequence AVALAKGKGN…GYSVLGHDAA (166 aa). A disordered region spans residues 457–485; that stretch reads LAKGKGNGRSPSAPSRYVGSSPTRSSTQV. The segment covering 465 to 485 has biased composition (polar residues); the sequence is RSPSAPSRYVGSSPTRSSTQV.

It belongs to the peptidase S8 family.

Its function is as follows. Agent of furonculosis. The sequence is that of Microbial serine proteinase (aspA) from Aeromonas salmonicida.